The sequence spans 487 residues: Glutamyl-tRNA(Gln) amidotransferase subunit A (487 aa).

Residues K82 and S157 each act as charge relay system in the active site. The Acyl-ester intermediate role is filled by S181.

Belongs to the amidase family. GatA subfamily. Heterotrimer of A, B and C subunits.

The catalysed reaction is L-glutamyl-tRNA(Gln) + L-glutamine + ATP + H2O = L-glutaminyl-tRNA(Gln) + L-glutamate + ADP + phosphate + H(+). Its function is as follows. Allows the formation of correctly charged Gln-tRNA(Gln) through the transamidation of misacylated Glu-tRNA(Gln) in organisms which lack glutaminyl-tRNA synthetase. The reaction takes place in the presence of glutamine and ATP through an activated gamma-phospho-Glu-tRNA(Gln). The polypeptide is Glutamyl-tRNA(Gln) amidotransferase subunit A (Fusobacterium nucleatum subsp. nucleatum (strain ATCC 25586 / DSM 15643 / BCRC 10681 / CIP 101130 / JCM 8532 / KCTC 2640 / LMG 13131 / VPI 4355)).